A 789-amino-acid chain; its full sequence is Aryl hydrocarbon receptor nuclear translocator (789 aa).

The span at 1-14 shows a compositional bias: polar residues; sequence MAATTANPEMTSDV. Positions 1–97 are disordered; sequence MAATTANPEM…RLARENHSEI (97 aa). At A2 the chain carries N-acetylalanine. The segment covering 26 to 35 has biased composition (gly residues); it reads SGPGIQGGGA. A Glycyl lysine isopeptide (Lys-Gly) (interchain with G-Cter in SUMO2) cross-link involves residue K58. Residues 60–97 are compositionally biased toward basic and acidic residues; it reads LRCDDDQMSNDKERFARSDDEQSSADKERLARENHSEI. S77 carries the phosphoserine modification. The segment at 88–128 is DNA-binding; sequence RLARENHSEIERRRRNKMTAYITELSDMVPTCSALARKPDK. Residues 89 to 142 enclose the bHLH domain; sequence LARENHSEIERRRRNKMTAYITELSDMVPTCSALARKPDKLTILRMAVSHMKSL. Positions 112-168 are required for heterodimer formation with HIF1A; that stretch reads LSDMVPTCSALARKPDKLTILRMAVSHMKSLRGTGNTSTDGSYKPSFLTDQELKHLI. The interval 112 to 264 is required for heterodimer formation with EPAS1; the sequence is LSDMVPTCSA…MCMGSRRSFI (153 aa). PAS domains lie at 161–235 and 349–419; these read DQEL…LTGR and PNCT…VKLK. Positions 167 to 171 are mediates the transcription activity and dimerization of the AHR:ARNT complex; that stretch reads LILEA. One can recognise a PAC domain in the interval 424-467; that stretch reads SVMFRFRSKNQEWLWMRTSSFTFQNPYSDEIEYIICTNTNVKNS. Over residues 465-481 the composition is skewed to polar residues; sequence KNSSQEPRPTLSNTIQR. Disordered regions lie at residues 465–492 and 672–789; these read KNSSQEPRPTLSNTIQRPQLGPTANLPL and TPSS…PFSE. Residues 672–696 show a composition bias toward low complexity; it reads TPSSFSSMSLPGAPTASPGAAAYPS. The segment covering 708–719 has biased composition (polar residues); the sequence is TGQTAGQFQTRT. Composition is skewed to low complexity over residues 723-733 and 743-756; these read VGVWPQWQGQQ and QHVQQPPAQQPGQP.

As to quaternary structure, monomer. Homodimer only upon binding to a DNA. Efficient DNA binding requires dimerization with another bHLH protein. Interacts with TACC3. Interacts with HIF1A, EPAS1, NPAS1 and NPAS3; forms a heterodimer that binds core DNA sequence 5'-TACGTG-3' within the hypoxia response element (HRE) of target gene promoters. Forms a heterodimer with AHRR, as well as with other bHLH proteins. Interacts with NOCA7. Interacts with TACC3. Interacts with AHR; the heterodimer ARNT:AHR binds to core DNA sequence 5'-TGCGTG-3' within the dioxin response element (DRE) of target gene promoters and activates their transcription. Interacts with SIM1 and NPAS4.

The protein localises to the nucleus. In terms of biological role, required for activity of the AHR. Upon ligand binding, AHR translocates into the nucleus, where it heterodimerizes with ARNT and induces transcription by binding to xenobiotic response elements (XRE). Not required for the ligand-binding subunit to translocate from the cytosol to the nucleus after ligand binding. The complex initiates transcription of genes involved in the regulation of a variety of biological processes, including angiogenesis, hematopoiesis, drug and lipid metabolism, cell motility and immune modulation. The heterodimer binds to core DNA sequence 5'-TACGTG-3' within the hypoxia response element (HRE) of target gene promoters and functions as a transcriptional regulator of the adaptive response to hypoxia. The heterodimer ARNT:AHR binds to core DNA sequence 5'-TGCGTG-3' within the dioxin response element (DRE) of target gene promoters and activates their transcription. The sequence is that of Aryl hydrocarbon receptor nuclear translocator from Homo sapiens (Human).